We begin with the raw amino-acid sequence, 371 residues long: Carnitine monooxygenase oxygenase subunit (371 aa).

The region spanning 44 to 152 is the Rieske domain; that stretch reads WICVAHSSEL…VEEYAGFLFI (109 aa). Residues C86, H88, C106, and H109 each coordinate [2Fe-2S] cluster. Residues H208, H213, and D323 each contribute to the Fe cation site.

It belongs to the bacterial ring-hydroxylating dioxygenase alpha subunit family. CntA subfamily. In terms of assembly, composed of an oxygenase subunit (cntA) and a reductase subunit (cntB). The cofactor is [2Fe-2S] cluster. Fe cation is required as a cofactor.

The enzyme catalyses (R)-carnitine + NADH + O2 + H(+) = (3R)-3-hydroxy-4-oxobutanoate + trimethylamine + NAD(+) + H2O. The catalysed reaction is (R)-carnitine + NADPH + O2 + H(+) = (3R)-3-hydroxy-4-oxobutanoate + trimethylamine + NADP(+) + H2O. It participates in amine and polyamine metabolism; carnitine metabolism. Functionally, converts carnitine to trimethylamine and malic semialdehyde. The polypeptide is Carnitine monooxygenase oxygenase subunit (Acinetobacter baumannii (strain ATCC 19606 / DSM 30007 / JCM 6841 / CCUG 19606 / CIP 70.34 / NBRC 109757 / NCIMB 12457 / NCTC 12156 / 81)).